We begin with the raw amino-acid sequence, 142 residues long: uncharacterized protein (142 aa).

A signal peptide spans 1–26 (MITEFIKSFLLFFFLPFFLSMPMIFA).

This is an uncharacterized protein from Schizosaccharomyces pombe (strain 972 / ATCC 24843) (Fission yeast).